A 134-amino-acid polypeptide reads, in one-letter code: Seminal plasma protein PDC-109 (134 aa).

The first 25 residues, 1-25 (MALQLGLFLIWAGVSVFLQLDPVNG), serve as a signal peptide directing secretion. Thr-36 carries an O-linked (GalNAc...) threonine glycan. 2 consecutive Fibronectin type-II domains span residues 44–88 (PEDE…YCAQ) and 89–134 (RDYA…WKYC). Intrachain disulfides connect Cys-49/Cys-73, Cys-63/Cys-86, Cys-94/Cys-119, and Cys-108/Cys-134.

The protein belongs to the seminal plasma protein family. Homodimer. O-linked glycan consists of Gal-GalNAc disaccharide which is modified with a sialic acid residue (macro- and/or microheterogeneity account for differences between BSP-A1 and BSP-A2). As to expression, major component of seminal plasma.

The protein localises to the secreted. In terms of biological role, could enhance the fertilizing capacity of bull spermatozoa upon interaction with heparin-like glycosaminoglycans present in the female genital tract. Exhibits both simulatory and inhibitory actions on the release of pituitary gonadotropins. The protein is Seminal plasma protein PDC-109 of Bos taurus (Bovine).